The sequence spans 373 residues: NK1 transcription factor-related protein 1 (373 aa).

Disordered stretches follow at residues 49 to 74 (ALPA…TVHR), 149 to 231 (SDFT…RRAR), and 281 to 328 (KWKK…SMHT). Positions 53–63 (ESRETSPRHEP) are enriched in basic and acidic residues. The span at 168-177 (EESSALTGNN) shows a compositional bias: polar residues. The segment covering 196 to 210 (GQQTQQSSSNGQNHQ) has biased composition (low complexity). The segment at residues 227-286 (PRRARTAFTYEQLVALENKFKSTRYLSVCERLNLALSLSLTETQVKIWFQNRRTKWKKQN) is a DNA-binding region (homeobox). The segment covering 296 to 310 (SGGGGGNGPSNGLGG) has biased composition (gly residues).

It belongs to the NK-1 homeobox family.

The protein resides in the nucleus. Its function is as follows. May participate in the energy homeostasis regulation. The sequence is that of NK1 transcription factor-related protein 1 from Danio rerio (Zebrafish).